The primary structure comprises 343 residues: Allantoicase (343 aa).

The protein belongs to the allantoicase family.

It catalyses the reaction allantoate + H2O = (S)-ureidoglycolate + urea. The protein operates within nitrogen metabolism; (S)-allantoin degradation; (S)-ureidoglycolate from allantoate (aminidohydrolase route): step 1/1. In terms of biological role, utilization of purines as secondary nitrogen sources, when primary sources are limiting. This Saccharomyces cerevisiae (strain ATCC 204508 / S288c) (Baker's yeast) protein is Allantoicase (DAL2).